A 513-amino-acid polypeptide reads, in one-letter code: Probable tubulin polyglutamylase ttll-15 (513 aa).

Positions 73-411 constitute a TTL domain; that stretch reads VTGSYESAHT…STPITKEADI (339 aa). Residues 216–219, lysine 229, and aspartate 231 each bind ATP; that span reads QKFV.

It belongs to the tubulin--tyrosine ligase family. In terms of tissue distribution, expressed in hypodermis and pharyngeal muscles.

Functionally, probable polyglutamylase that forms polyglutamate side chains on tubulin. Probably acts when complexed with other proteins. Appears to be dispensable for polar spindle formation in dividing embryonic cells, for cilia-dependent osmotic avoidance and for male mating behavior. Regulates microtubule dynamics in uterine muscle cells. The protein is Probable tubulin polyglutamylase ttll-15 of Caenorhabditis elegans.